Here is a 166-residue protein sequence, read N- to C-terminus: NADH-quinone oxidoreductase subunit C (166 aa).

Belongs to the complex I 30 kDa subunit family. As to quaternary structure, NDH-1 is composed of 14 different subunits. Subunits NuoB, C, D, E, F, and G constitute the peripheral sector of the complex.

The protein localises to the cell inner membrane. It catalyses the reaction a quinone + NADH + 5 H(+)(in) = a quinol + NAD(+) + 4 H(+)(out). In terms of biological role, NDH-1 shuttles electrons from NADH, via FMN and iron-sulfur (Fe-S) centers, to quinones in the respiratory chain. The immediate electron acceptor for the enzyme in this species is believed to be a menaquinone. Couples the redox reaction to proton translocation (for every two electrons transferred, four hydrogen ions are translocated across the cytoplasmic membrane), and thus conserves the redox energy in a proton gradient. This chain is NADH-quinone oxidoreductase subunit C, found in Chlorobium phaeobacteroides (strain DSM 266 / SMG 266 / 2430).